The primary structure comprises 140 residues: Large ribosomal subunit protein uL16 (140 aa).

Residues 1–16 (MLMPKRVKHRKQMKGR) show a composition bias toward basic residues. A disordered region spans residues 1 to 20 (MLMPKRVKHRKQMKGRMKGD).

This sequence belongs to the universal ribosomal protein uL16 family. As to quaternary structure, part of the 50S ribosomal subunit.

Its function is as follows. Binds 23S rRNA and is also seen to make contacts with the A and possibly P site tRNAs. This Geobacter sulfurreducens (strain ATCC 51573 / DSM 12127 / PCA) protein is Large ribosomal subunit protein uL16.